A 679-amino-acid polypeptide reads, in one-letter code: Glycine--tRNA ligase beta subunit (679 aa).

Belongs to the class-II aminoacyl-tRNA synthetase family. In terms of assembly, tetramer of two alpha and two beta subunits.

The protein localises to the cytoplasm. It carries out the reaction tRNA(Gly) + glycine + ATP = glycyl-tRNA(Gly) + AMP + diphosphate. The sequence is that of Glycine--tRNA ligase beta subunit (glyS) from Bacillus subtilis (strain 168).